Consider the following 232-residue polypeptide: MQKNAAHTYAISSLLVLSLTGCAWIPSTPLVQGATSAQPVPGPAPVANGSIFQSAQPINYGYQPLFEDRRPRNIGDTLTIVLQENVSASKSSSANASRDGKTNFGFDTVPRYLQGLFGNARADVEASGGNTFNGKGGANASNTFSGTLTVTVDQVLVNGNLHVVGEKQIAINQGTEFIRFSGVVNPRTISGSNTVPSTQVADARIEYVGNGYINEAQNMGWLQRFFLNLSPM.

The N-terminal stretch at 1 to 21 is a signal peptide; that stretch reads MQKNAAHTYAISSLLVLSLTG. Cys-22 carries the N-palmitoyl cysteine lipid modification. Residue Cys-22 is the site of S-diacylglycerol cysteine attachment.

It belongs to the FlgH family. In terms of assembly, the basal body constitutes a major portion of the flagellar organelle and consists of four rings (L,P,S, and M) mounted on a central rod.

Its subcellular location is the cell outer membrane. It localises to the bacterial flagellum basal body. Assembles around the rod to form the L-ring and probably protects the motor/basal body from shearing forces during rotation. The protein is Flagellar L-ring protein of Escherichia coli O7:K1 (strain IAI39 / ExPEC).